The chain runs to 1189 residues: MSVACVLKRKAVLWQDSFSPHLKHHPQEPANPNMPVVLTSGTGSQAQPQPAANQALAAGTHSSPVPGSIGVAGRSQDDAMVDYFFQRQHGEQLGGGGSGGGGYNTSKHRWPTGDNIHAEHQVRSMDELNHDFQALALEGRAMGEQLLPGKKFWETDESSKDGPKGIFLGDQWRDSAWGTSDHSVSQPIMVQRRPGQSFHVNSEVNSVLSPRSESGGLGVSMVEYVLSSSPGDSCLRKGGFGPRDADSDENDKGEKKNKGTFDGDKLGDLKEEGDVMDKTNGLPVQNGIDADVKDFSRTPGNCQNSANEVDLLGPNQNGSEGLAQLTSTNGAKPVEDFSNMESQSVPLDPMEHVGMEPLQFDYSGTQVPVDSAAATVGLFDYNSQQQLFQRPNALAVQQLTAAQQQQYALAAAHQPHIAGLAPAAFVPNPYIISAAPPGTDPYTAGLAAAATLGPAVVPHQYYGVTPWGVYPASLFQQQAAAAAAATNSATQQSAPQAQQGQQQVLRGGASQRPLTPNQNQQGQQTDPLVAAAAVNSALAFGQGLAAGMPGYPVLAPAAYYDQTGALVVNAGARNGLGAPVRLVAPAPVIISSSAAQAAVAAAAASANGAAGGLAGTTNGPFRPLGTQQPQPQPQQQPSNNLASSSFYGNNSLSSNSQSSSLFSQGSAQPANTSLGFGSSSSLGATLGSALGGFGTAVANSNTGSGSRRDSLTGSSDLYKRTSSSLAPIGHSFYSSLSYSSSPGPVGMPLPSQGPGHSQTPPPSLSSHGSSSSLNLGGLTNGSGRYISAAPGAEAKYRSASSASSLFSPSSTLFSSSRLRYGMSDVMPSGRSRLLEDFRNNRYPNLQLREIAGHIMEFSQDQHGSRFIQLKLERATAAERQLVFNEILQAAYQLMVDVFGNYVIQKFFEFGSHEQKLALAERIRGHVLSLALQMYGCRVIQKALEFIPSDQQVINEMVRELDGHVLKCVKDQNGNHVVQKCIECVQPQSLQFIIDAFKGQVFALSTHPYGCRVIQRILEHCLPDQTLPILEELHQHTEQLVQDQYGNYVIQHVLEHGRPEDKSKIVAEIRGNVLVLSQHKFASNVVEKCVTHASRTERAVLIDEVCTMNDGPHSALYTMMKDQYANYVVQKMIDVAEPGQRKIVMHKIRPHIATLRKYTYGKHILAKLEKYYMKNGVDLGPICGPPNGII.

Ser-2 carries the post-translational modification N-acetylserine. Ser-19 bears the Phosphoserine mark. The tract at residues 22-73 is disordered; the sequence is LKHHPQEPANPNMPVVLTSGTGSQAQPQPAANQALAAGTHSSPVPGSIGVAG. The span at 45–58 shows a compositional bias: low complexity; the sequence is QAQPQPAANQALAA. Phosphoserine occurs at positions 75, 98, and 106. Phosphothreonine is present on Thr-112. A phosphoserine mark is found at Ser-124, Ser-159, Ser-197, Ser-209, and Ser-229. A disordered region spans residues 233–272; that stretch reads SCLRKGGFGPRDADSDENDKGEKKNKGTFDGDKLGDLKEE. Over residues 250–272 the composition is skewed to basic and acidic residues; it reads NDKGEKKNKGTFDGDKLGDLKEE. At Ser-305 the chain carries Phosphoserine. The segment covering 491-503 has biased composition (low complexity); it reads QQSAPQAQQGQQQ. Disordered regions lie at residues 491–525 and 614–647; these read QQSAPQAQQGQQQVLRGGASQRPLTPNQNQQGQQT and AGTTNGPFRPLGTQQPQPQPQQQPSNNLASSSFY. The segment covering 512–525 has biased composition (polar residues); the sequence is RPLTPNQNQQGQQT. Thr-515 carries the phosphothreonine modification. A compositionally biased stretch (low complexity) spans 627 to 647; it reads QQPQPQPQQQPSNNLASSSFY. Ser-710 and Ser-715 each carry phosphoserine. Residues 743–773 form a disordered region; the sequence is GPVGMPLPSQGPGHSQTPPPSLSSHGSSSSL. Low complexity predominate over residues 764–773; the sequence is LSSHGSSSSL. Position 797 is an omega-N-methylarginine (Arg-797). Phosphoserine occurs at positions 807 and 823. Residues 829–1171 enclose the PUM-HD domain; the sequence is GRSRLLEDFR…HILAKLEKYY (343 aa). 8 Pumilio repeats span residues 849–884, 885–920, 921–958, 959–994, 995–1030, 1031–1066, 1067–1102, and 1106–1145; these read EIAGHIMEFSQDQHGSRFIQLKLERATAAERQLVFN, EILQAAYQLMVDVFGNYVIQKFFEFGSHEQKLALAE, RIRGHVLSLALQMYGCRVIQKALEFIPSDQQVINEMVR, ELDGHVLKCVKDQNGNHVVQKCIECVQPQSLQFIID, AFKGQVFALSTHPYGCRVIQRILEHCLPDQTLPILE, ELHQHTEQLVQDQYGNYVIQHVLEHGRPEDKSKIVA, EIRGNVLVLSQHKFASNVVEKCVTHASRTERAVLID, and TMNDGPHSALYTMMKDQYANYVVQKMIDVAEPGQRKIVMH. The adenine-nucleotide binding in RNA target stretch occupies residues 864-868; the sequence is SRFIQ. The interval 900-904 is uracil-nucleotide binding in RNA target; it reads NYVIQ. Residues 936 to 940 are adenine-nucleotide binding in RNA target; that stretch reads CRVIQ. A non-specific-nucleotide binding in RNA target region spans residues 974–978; sequence NHVVQ. The segment at 1010–1014 is adenine-nucleotide binding in RNA target; sequence CRVIQ. Residues 1046 to 1050 are uracil-nucleotide binding in RNA target; that stretch reads NYVIQ. 2 guanine-nucleotide binding in RNA target regions span residues 1082–1086 and 1083–1086; these read SNVVE and NVVE. Positions 1125–1129 are uracil-nucleotide binding in RNA target; sequence NYVVQ.

As to quaternary structure, recruits the CCR4-POP2-NOT deadenylase leading to translational inhibition and mRNA degradation. Interacts with TRIM71 (via NHL repeats) in an RNA-dependent manner. Phosphorylation at Ser-715 promotes RNA-binding activity. Following growth factor stimulation phosphorylated at Ser-715, promoting binding to the 3'-UTR of CDKN1B/p27 mRNA. Widely expressed. Expressed in brain, heart, kidney, liver, lung, skin, intestine, spleen, testis and thymus. Weakly or not expressed in muscles and stomach. Expressed at various stages of myeloid and lymphoid cell development. Highly expressed in testis. Expressed in all major brain regions (at protein level).

The protein localises to the cytoplasm. Its subcellular location is the P-body. It localises to the cytoplasmic granule. In terms of biological role, sequence-specific RNA-binding protein that acts as a post-transcriptional repressor by binding the 3'-UTR of mRNA targets. Binds to an RNA consensus sequence, the Pumilio Response Element (PRE), 5'-UGUANAUA-3', that is related to the Nanos Response Element (NRE). Mediates post-transcriptional repression of transcripts via different mechanisms: acts via direct recruitment of the CCR4-POP2-NOT deadenylase leading to translational inhibition and mRNA degradation. Also mediates deadenylation-independent repression by promoting accessibility of miRNAs. Following growth factor stimulation, phosphorylated and binds to the 3'-UTR of CDKN1B/p27 mRNA, inducing a local conformational change that exposes miRNA-binding sites, promoting association of miR-221 and miR-222, efficient suppression of CDKN1B/p27 expression, and rapid entry to the cell cycle. Acts as a post-transcriptional repressor of E2F3 mRNAs by binding to its 3'-UTR and facilitating miRNA regulation. Represses a program of genes necessary to maintain genomic stability such as key mitotic, DNA repair and DNA replication factors. Its ability to repress those target mRNAs is regulated by the lncRNA NORAD (non-coding RNA activated by DNA damage) which, due to its high abundance and multitude of PUMILIO binding sites, is able to sequester a significant fraction of PUM1 and PUM2 in the cytoplasm. Involved in neuronal functions by regulating ATXN1 mRNA levels: acts by binding to the 3'-UTR of ATXN1 transcripts, leading to their down-regulation independently of the miRNA machinery. In testis, acts as a post-transcriptional regulator of spermatogenesis by binding to the 3'-UTR of mRNAs coding for regulators of p53/TP53. Involved in embryonic stem cell renewal by facilitating the exit from the ground state: acts by targeting mRNAs coding for naive pluripotency transcription factors and accelerates their down-regulation at the onset of differentiation. Binds specifically to miRNA MIR199A precursor, with PUM2, regulates miRNA MIR199A expression at a postranscriptional level. The protein is Pumilio homolog 1 of Mus musculus (Mouse).